The sequence spans 187 residues: MTNKCLLQIALLLCFSTTALSMSYNLLGFLQRSSNFQCQKLLWQLNGRLEYCLKDRMNFDIPEEIKQLQQFQKEDAALTIYEMLQNIFAIFRQDSSSTGWNETIVENLLANVYHQINHLKTVLEEKLEKEDFTRGKLMSSLHLKRYYGRILHYLKAKEYSHCAWTIVRVEILRNFYFINRLTGYLRN.

An N-terminal signal peptide occupies residues 1–21 (MTNKCLLQIALLLCFSTTALS). A Phosphotyrosine modification is found at Y24. C52 and C162 are oxidised to a cystine. N101 carries an N-linked (GlcNAc...) asparagine glycan.

It belongs to the alpha/beta interferon family. As to quaternary structure, monomer.

The protein resides in the secreted. In terms of biological role, type I interferon cytokine that plays a key role in the innate immune response to infection, developing tumors and other inflammatory stimuli. Signals via binding to high-affinity (IFNAR2) and low-affinity (IFNAR1) heterodimeric receptor, activating the canonical Jak-STAT signaling pathway resulting in transcriptional activation or repression of interferon-regulated genes that encode the effectors of the interferon response, such as antiviral proteins, regulators of cell proliferation and differentiation, and immunoregulatory proteins. Signals mostly via binding to a IFNAR1-IFNAR2 heterodimeric receptor, but can also function with IFNAR1 alone and independently of Jak-STAT pathways. Elicits a wide variety of responses, including antiviral and antibacterial activities, and can regulate the development of B-cells, myelopoiesis and lipopolysaccharide (LPS)-inducible production of tumor necrosis factor. Plays a role in neuronal homeostasis by regulating dopamine turnover and protecting dopaminergic neurons: acts by promoting neuronal autophagy and alpha-synuclein clearance, thereby preventing dopaminergic neuron loss. IFNB1 is more potent than interferon-alpha (IFN-alpha) in inducing the apoptotic and antiproliferative pathways required for control of tumor cell growth. This is Interferon beta from Homo sapiens (Human).